A 273-amino-acid polypeptide reads, in one-letter code: NADPH-dependent 7-cyano-7-deazaguanine reductase (273 aa).

Residue 80–82 (VES) coordinates substrate. 82 to 83 (SK) provides a ligand contact to NADPH. Cysteine 180 serves as the catalytic Thioimide intermediate. Aspartate 187 (proton donor) is an active-site residue. Residue 219-220 (HE) participates in substrate binding. 248-249 (RG) provides a ligand contact to NADPH.

It belongs to the GTP cyclohydrolase I family. QueF type 2 subfamily. In terms of assembly, homodimer.

It is found in the cytoplasm. The catalysed reaction is 7-aminomethyl-7-carbaguanine + 2 NADP(+) = 7-cyano-7-deazaguanine + 2 NADPH + 3 H(+). Its pathway is tRNA modification; tRNA-queuosine biosynthesis. In terms of biological role, catalyzes the NADPH-dependent reduction of 7-cyano-7-deazaguanine (preQ0) to 7-aminomethyl-7-deazaguanine (preQ1). The chain is NADPH-dependent 7-cyano-7-deazaguanine reductase from Bordetella bronchiseptica (strain ATCC BAA-588 / NCTC 13252 / RB50) (Alcaligenes bronchisepticus).